The sequence spans 77 residues: Conodipine-M alpha chain (77 aa).

Gln-1 carries the pyrrolidone carboxylic acid modification. His-36 is a catalytic residue.

In terms of assembly, heterodimer of an alpha and a beta chains; probably disulfide-linked. Ca(2+) serves as cofactor. As to expression, expressed by the venom duct.

Its subcellular location is the secreted. It catalyses the reaction a 1,2-diacyl-sn-glycero-3-phosphocholine + H2O = a 1-acyl-sn-glycero-3-phosphocholine + a fatty acid + H(+). Inhibited by linoleoyl amide and MG14. Heterodimer: conodipine-M catalyzes the calcium-dependent hydrolysis of the 2-acyl groups in 3-sn-phosphoglycerides. This activity may be supported by the alpha chain. Conodipine-M inhibits the binding of isradipine (a ligand specific for L-type calcium channel) to L-type calcium channels. This Conus magus (Magical cone) protein is Conodipine-M alpha chain.